The sequence spans 142 residues: MAARNTARKRAFQILFEGDQRGADVLTVLADWVRHSRSDTRQPPVSEYTMELVEGYAGRAERIDELIAQYSVDWTLDRMPVVDRNILRLGAYELLWVDATPDAVVLDEMVQLAKEFSTDESPAFINGLLGRLKELKPSLRRE.

This sequence belongs to the NusB family.

Its function is as follows. Involved in transcription antitermination. Required for transcription of ribosomal RNA (rRNA) genes. Binds specifically to the boxA antiterminator sequence of the ribosomal RNA (rrn) operons. The protein is Transcription antitermination protein NusB of Streptomyces coelicolor (strain ATCC BAA-471 / A3(2) / M145).